The sequence spans 114 residues: Fluoride-specific ion channel FluC 1 (114 aa).

The next 4 helical transmembrane spans lie at 3 to 23 (IDIK…GALF), 30 to 50 (IFIV…LNIL), 55 to 75 (LTLC…MSHL), and 87 to 107 (FLLN…LGHI). Gly-63 and Thr-66 together coordinate Na(+).

This sequence belongs to the fluoride channel Fluc/FEX (TC 1.A.43) family.

Its subcellular location is the cell inner membrane. The catalysed reaction is fluoride(in) = fluoride(out). Its activity is regulated as follows. Na(+) is not transported, but it plays an essential structural role and its presence is essential for fluoride channel function. Functionally, fluoride-specific ion channel. Important for reducing fluoride concentration in the cell, thus reducing its toxicity. In Prochlorococcus marinus (strain NATL2A), this protein is Fluoride-specific ion channel FluC 1.